The following is a 392-amino-acid chain: Lipid-A-disaccharide synthase (392 aa).

This sequence belongs to the LpxB family.

The enzyme catalyses a lipid X + a UDP-2-N,3-O-bis[(3R)-3-hydroxyacyl]-alpha-D-glucosamine = a lipid A disaccharide + UDP + H(+). The protein operates within bacterial outer membrane biogenesis; LPS lipid A biosynthesis. Condensation of UDP-2,3-diacylglucosamine and 2,3-diacylglucosamine-1-phosphate to form lipid A disaccharide, a precursor of lipid A, a phosphorylated glycolipid that anchors the lipopolysaccharide to the outer membrane of the cell. This Prochlorococcus marinus (strain MIT 9313) protein is Lipid-A-disaccharide synthase.